Reading from the N-terminus, the 77-residue chain is Apelin (77 aa).

The signal sequence occupies residues 1 to 22 (MNLSFCVQALLLLWLSLTAVCG). Positions 23–41 (VPLMLPPDGKGLEEGNMRY) are excised as a propeptide. The segment at 45 to 77 (PRTSRTGPGAWQGGRRKFRRQRPRLSHKGPMPF) is disordered. Over residues 58–71 (GRRKFRRQRPRLSH) the composition is skewed to basic residues.

It belongs to the apelin family. Several active peptides may be produced by proteolytic processing of the peptide precursor. Expressed in the lung, testis, ovary, uterus and mammary gland. Expressed in neurons in the thalamic paraventricular and hypothalamic supraoptic nuclei. The lung, testis and uterus mainly contain a large form that looks like apelin-36, whereas the mammary gland seems to contain 2 forms of apelin, a large form close to apelin-36 and a small form close to apelin-13 (at protein level). Widely expressed in the adult, with highest levels in the mammary gland of lactating animals, very high levels in the lung, intermediate levels in the spinal cord, ovary, adipose tissue, brain (neuronal cell bodies and fibers in the supraoptic and the paraventricular nuclei), heart and testis, and lowest levels in the pituitary gland, kidney, stomach, uterus and pancreas.

It localises to the secreted. Its subcellular location is the extracellular space. Functionally, peptide hormone that functions as endogenous ligand for the G-protein-coupled apelin receptor (APLNR/APJ), that plays a role in cadiovascular homeostasis. Functions as a balanced agonist activating both G(i) protein pathway and beta-arrestin pathway of APLNR. Downstream G proteins activation, apelin can inhibit cAMP production and activate key intracellular effectors such as ERKs. On the other hand, APLNR activation induces beta-arrestin recruitment to the membrane leading to desensitization and internalization of the receptor. Apelin blunts cardiac hypertrophic induction from APLNR on response to pathological stimuli, but also induces myocardial hypertrophy under normal conditions. Apelin-36 dissociates more hardly than (pyroglu)apelin-13 from APLNR. Involved in the regulation of cardiac precursor cell movements during gastrulation and heart morphogenesis. Has an inhibitory effect on cytokine production in response to T-cell receptor/CD3 cross-linking; the oral intake of apelin in the colostrum and the milk might therefore modulate immune responses in neonates. Plays a role in early coronary blood vessels formation. Mediates myocardial contractility in an ERK1/2-dependent manner. May also have a role in the central control of body fluid homeostasis by influencing vasopressin release and drinking behavior. The sequence is that of Apelin from Rattus norvegicus (Rat).